The following is a 424-amino-acid chain: UDP-N-acetylglucosamine 1-carboxyvinyltransferase (424 aa).

22 to 23 (KN) contacts phosphoenolpyruvate. Arg93 provides a ligand contact to UDP-N-acetyl-alpha-D-glucosamine. The active-site Proton donor is Cys117. Cys117 is modified (2-(S-cysteinyl)pyruvic acid O-phosphothioketal). UDP-N-acetyl-alpha-D-glucosamine contacts are provided by residues 162 to 165 (KVSV), Asp307, and Ile329.

This sequence belongs to the EPSP synthase family. MurA subfamily.

It localises to the cytoplasm. The enzyme catalyses phosphoenolpyruvate + UDP-N-acetyl-alpha-D-glucosamine = UDP-N-acetyl-3-O-(1-carboxyvinyl)-alpha-D-glucosamine + phosphate. The protein operates within cell wall biogenesis; peptidoglycan biosynthesis. Cell wall formation. Adds enolpyruvyl to UDP-N-acetylglucosamine. This chain is UDP-N-acetylglucosamine 1-carboxyvinyltransferase, found in Actinobacillus pleuropneumoniae serotype 7 (strain AP76).